Consider the following 176-residue polypeptide: MFANARAKRRSRASSPTPARLGGYAPLRVEITEEQRQDINEAFKLFDSDKDNAIDYHELRAAMRALGFNAEKSEVLKILRDFDKTGKGYLQMEDFVRVMTEKIVERDPLEEIKRAFELFDDDETGKISLRNLRRVAKELNENIDDQELEAMIEEFDLDQDGEINEQEFIAIMMDEA.

A compositionally biased stretch (basic residues) spans 1–12 (MFANARAKRRSR). Residues 1–21 (MFANARAKRRSRASSPTPARL) are disordered. EF-hand domains are found at residues 34-69 (EQRQDINEAFKLFDSDKDNAIDYHELRAAMRALGFN), 70-105 (AEKSEVLKILRDFDKTGKGYLQMEDFVRVMTEKIVE), 107-142 (DPLEEIKRAFELFDDDETGKISLRNLRRVAKELNEN), and 143-176 (IDDQELEAMIEEFDLDQDGEINEQEFIAIMMDEA). Residues aspartate 47, aspartate 49, aspartate 51, and glutamate 58 each contribute to the Ca(2+) site. Ca(2+) contacts are provided by aspartate 156, aspartate 158, aspartate 160, glutamate 162, and glutamate 167.

It belongs to the centrin family. Component of the spindle pole body (SPB), acting as the connector of microtubule arrays in the cytoplasm and the nucleoplasm, is involved in nuclear positioning before chromosome segregation, SPB separation, spindle formation, chromosome segregation, nuclear migration into the bud, nuclear reorientation after cytokinesis and nuclear fusion during conjugation. The SPB half-bridge, which is tightly associated with the cytoplasmic side of the nuclear envelope and the SPB, is playing a key role as the starting structure for and in the initiation of SPB duplication in G1. Within the complex, interacts with sad1.

It localises to the nucleus. Required for the proper coordination between exit from mitosis and the initiation of septation. Has a role in bipolar spindle formation during spindle pole body (SPB) duplication. Required for the localization of sad1 to the SPB. The protein is Cell division control protein 31 (cdc31) of Schizosaccharomyces pombe (strain 972 / ATCC 24843) (Fission yeast).